Reading from the N-terminus, the 92-residue chain is Small ribosomal subunit protein uS19c (92 aa).

This sequence belongs to the universal ribosomal protein uS19 family.

It is found in the plastid. The protein resides in the chloroplast. In terms of biological role, protein S19 forms a complex with S13 that binds strongly to the 16S ribosomal RNA. This Ostreococcus tauri protein is Small ribosomal subunit protein uS19c.